We begin with the raw amino-acid sequence, 263 residues long: 3-oxo-5-alpha-steroid 4-dehydrogenase 1 (263 aa).

5 consecutive transmembrane segments (helical) span residues 16–33 (MLAA…AVLA), 90–110 (ILLA…PFLM), 115–135 (PMPL…GYLQ), 155–175 (FLIG…SDHI), and 213–233 (YALA…FCFL).

Belongs to the steroid 5-alpha reductase family.

Its subcellular location is the microsome membrane. It is found in the endoplasmic reticulum membrane. The enzyme catalyses a 3-oxo-5alpha-steroid + NADP(+) = a 3-oxo-Delta(4)-steroid + NADPH + H(+). It catalyses the reaction 5alpha-pregnane-3,20-dione + NADP(+) = progesterone + NADPH + H(+). The catalysed reaction is 17beta-hydroxy-5alpha-androstan-3-one + NADP(+) = testosterone + NADPH + H(+). It carries out the reaction androst-4-ene-3,17-dione + NADPH + H(+) = 5alpha-androstan-3,17-dione + NADP(+). Functionally, converts testosterone into 5-alpha-dihydrotestosterone and progesterone or corticosterone into their corresponding 5-alpha-3-oxosteroids. It plays a central role in sexual differentiation and androgen physiology. This Macaca fascicularis (Crab-eating macaque) protein is 3-oxo-5-alpha-steroid 4-dehydrogenase 1 (SRD5A1).